A 548-amino-acid chain; its full sequence is Chaperonin GroEL (548 aa).

Residues 30–33 (TLGP), Lys51, 87–91 (DGTTT), Gly415, 479–481 (NAA), and Asp495 each bind ATP.

This sequence belongs to the chaperonin (HSP60) family. Forms a cylinder of 14 subunits composed of two heptameric rings stacked back-to-back. Interacts with the co-chaperonin GroES.

It is found in the cytoplasm. The enzyme catalyses ATP + H2O + a folded polypeptide = ADP + phosphate + an unfolded polypeptide.. Together with its co-chaperonin GroES, plays an essential role in assisting protein folding. The GroEL-GroES system forms a nano-cage that allows encapsulation of the non-native substrate proteins and provides a physical environment optimized to promote and accelerate protein folding. The polypeptide is Chaperonin GroEL (Proteus mirabilis (strain HI4320)).